We begin with the raw amino-acid sequence, 370 residues long: G-protein coupled receptor homolog K2 (370 aa).

The Extracellular portion of the chain corresponds to 1–61 (MTSPTNSTML…CTFLEDTKYH (61 aa)). Residues Asn6 and Asn51 are each glycosylated (N-linked (GlcNAc...) asparagine; by host). The chain crosses the membrane as a helical span at residues 62–82 (IIVIHIILFLLGSIGNIFVVS). The Cytoplasmic portion of the chain corresponds to 83–94 (LIAFKRNKSITD). Residues 95-115 (IYILNLSMSDCIFVFQIPFIV) traverse the membrane as a helical segment. Residues 116–131 (YSKLDQWIFGNILCKI) are Extracellular-facing. Residues 132-152 (MSVLYYVGFFSNMFIITLMSI) traverse the membrane as a helical segment. Over 153–171 (DRYFAIVHPIKRQPYRTKR) the chain is Cytoplasmic. Residues 172–192 (IGILMCCSAWLLSLILSSPVS) form a helical membrane-spanning segment. At 193–223 (KLYENIPHMSKDIYQCTLTNENDSIIAFIKR) the chain is on the extracellular side. Residues 224-244 (LMQIEITILGFLIPIIIFVYC) traverse the membrane as a helical segment. The Cytoplasmic segment spans residues 245 to 265 (YYRIFTTVVRLRNRRKYKSIK). Residues 266–286 (IVLMIVVCSLICWIPLYIVLM) traverse the membrane as a helical segment. Over 287-300 (IATIVSLYTSNIFR) the chain is Extracellular. A helical transmembrane segment spans residues 301-321 (HLCLYLNLAYAITFSETISLA). Over 322 to 370 (RCCINPIIYTLIGEHVRSRISSICSCIYRDNRIRKKLFSRKSSSSSNII) the chain is Cytoplasmic.

This sequence belongs to the G-protein coupled receptor 1 family.

Its subcellular location is the host cell membrane. Putative chemokine receptor. The chain is G-protein coupled receptor homolog K2 from Sus scrofa (Pig).